A 116-amino-acid polypeptide reads, in one-letter code: UPF0102 protein Sala_0262 (116 aa).

It belongs to the UPF0102 family.

The chain is UPF0102 protein Sala_0262 from Sphingopyxis alaskensis (strain DSM 13593 / LMG 18877 / RB2256) (Sphingomonas alaskensis).